A 514-amino-acid polypeptide reads, in one-letter code: 2,3-bisphosphoglycerate-independent phosphoglycerate mutase (514 aa).

Mn(2+) is bound by residues Asp14 and Ser64. Ser64 (phosphoserine intermediate) is an active-site residue. Residues His125, 155–156 (RD), Arg187, Arg193, 263–266 (RADR), and Lys336 contribute to the substrate site. Mn(2+) is bound by residues Asp403, His407, Asp444, His445, and His463.

This sequence belongs to the BPG-independent phosphoglycerate mutase family. In terms of assembly, monomer. It depends on Mn(2+) as a cofactor.

It carries out the reaction (2R)-2-phosphoglycerate = (2R)-3-phosphoglycerate. It participates in carbohydrate degradation; glycolysis; pyruvate from D-glyceraldehyde 3-phosphate: step 3/5. In terms of biological role, catalyzes the interconversion of 2-phosphoglycerate and 3-phosphoglycerate. The protein is 2,3-bisphosphoglycerate-independent phosphoglycerate mutase of Shewanella sp. (strain MR-4).